We begin with the raw amino-acid sequence, 504 residues long: Arabinose import ATP-binding protein AraG (504 aa).

ABC transporter domains lie at Leu-8 to Arg-243 and Tyr-256 to Val-499. Gly-40–Ser-47 lines the ATP pocket.

This sequence belongs to the ABC transporter superfamily. Arabinose importer (TC 3.A.1.2.2) family. In terms of assembly, the complex is composed of two ATP-binding proteins (AraG), two transmembrane proteins (AraH) and a solute-binding protein (AraF).

The protein localises to the cell inner membrane. The enzyme catalyses L-arabinose(out) + ATP + H2O = L-arabinose(in) + ADP + phosphate + H(+). Functionally, part of the ABC transporter complex AraFGH involved in arabinose import. Responsible for energy coupling to the transport system. In Shigella flexneri, this protein is Arabinose import ATP-binding protein AraG.